A 303-amino-acid polypeptide reads, in one-letter code: Target of rapamycin complex subunit LST8 (303 aa).

WD repeat units lie at residues 1–27 (MSVI…CSRT), 30–68 (HSDS…PNPV), 73–112 (GHRG…IPRN), 114–153 (KHNA…CTHQ), 157–196 (EDDT…DASH), 205–244 (AHST…KLET), and 248–287 (GHQR…IVRQ).

The protein belongs to the WD repeat LST8 family. As to quaternary structure, the target of rapamycin complex 1 (TORC1) is composed of at least KOG1, LST8, TCO89 and either TOR1 (TORC1-A) or TOR2 (TORC1-B). TORC1 binds to and is inhibited by FKBP-rapamycin. Interacts with PIB2; following activation of PIB2 by glutamine or cysteine and as part of the TORC1 complex. The target of rapamycin complex 2 (TORC2) is composed of at least AVO1, AVO2, BIT61, LST8, TOR2 and TSC11. TORC2 forms a homodimer. Contrary to TORC1, TORC2 does not bind to and is not sensitive to FKBP-rapamycin. LST8 binds to the C-terminal kinase domain in TOR2.

It localises to the cell membrane. The protein resides in the vacuole membrane. Functionally, essential component of both TORC1 and TORC2. TORC1 regulates multiple cellular processes to control cell growth in response to environmental signals. Nutrient limitation and environmental stress signals cause inactivation of TORC1. Active TORC1 positively controls ribosome biogenesis via control of rRNA, ribosomal protein and tRNA gene expression, and rRNA processing. TORC1 positively controls protein biosynthesis by regulation of mRNA stability, translation initiation factor activity, and high-affinity amino acid permeases that serve to provide amino acids for use by the translation machinery. TORC1 also promotes growth by sequestering a number of nutrient and general stress-responsive transcription factors in the cytoplasm. TORC1 negatively controls macroautophagy, a process to recycle surplus cytoplasmic mass under nutrient starvation conditions. LST8 is involved in the negative regulation of transcription factors GLN3 and RTG1-RTG3, limiting the synthesis of alpha-ketoglutarate, glutamate and glutamine. LST8 is required for targeting of amino acid permeases (AAPs) to the plasma membrane. TORC2 regulates cell cycle-dependent polarization of the actin-cytoskeleton, cell wall integrity, and receptor endocytosis. TORC2 controls polarity of the actin cytoskeleton, which is required for orienting the secretory pathway toward discrete growth sites, via the RHO1/PKC1/MAPK cell integrity pathway. LST8 is involved in maintenance of cell wall integrity. LST8 modulates TOR2 kinase activity. This Saccharomyces cerevisiae (strain ATCC 204508 / S288c) (Baker's yeast) protein is Target of rapamycin complex subunit LST8.